Reading from the N-terminus, the 502-residue chain is MLALWVLAVALVAYFLCLSIYRLFLHPLANIPGPKLCALTGWYEVFWDIVVGGQFTFKIEEWHKTYGPVMRIGPNEVHFNDPDFYNELYTTTAAYQKPAEWRYRFGFGSALFDTVDHEHHAKRRAPLAAFFSRSKILEFSPFIQEQTDLLVQRIQEYEGQVICANEAFDALTMDIIGYYAFGLSYRSIDYPKFQAPCNHVTEDVARMVHTGAHFPWVFTILRSIPQAIVSLLAPPMKKIFKFNEEIAAQIRRILKNRVNLDQEKNFHRTIFHEILNSKLDPSELTQERLQMEAGSLVGAALETSKMTTALAIYYILAQPDVEKKLREELRTAMPDPGKILSVPELEQLPYLAACIREALRLAIGVSQRIRRYNPHAPTQYKNYTIPPNTVFGMCHWEQLRDARVWDRPYEFLPERWLANNGNPLALNGQPLAKYFVPFHRGPRGCLGKEMGMAQLNIGLATLFRRVDHLELFETDQSAVDIVADYFVPLCVKGSKGVRVLVK.

Residues 3 to 25 (ALWVLAVALVAYFLCLSIYRLFL) traverse the membrane as a helical segment. Residue Asn382 is glycosylated (N-linked (GlcNAc...) asparagine). Cys445 serves as a coordination point for heme.

It belongs to the cytochrome P450 family. It depends on heme as a cofactor.

It localises to the membrane. Its pathway is mycotoxin biosynthesis. Cytochrome P450 monooxygenase; part of the gene cluster that mediates the biosynthesis of brefeldin A (BFA), a protein transport inhibitor that shows antiviral, antifungal, and antitumor properties. The proposed biosynthesis of BFA involves formation of an acyclic polyketide chain that is differentially tailored throughout the backbone. The highly reducing polyketide synthase Bref-PKS is proposed to synthesize the precisely reduced octaketide precursor, which could then be directly offloaded by the thiohydrolase enzyme Bref-TH followed by a cytochrome P450 monooxygenase-mediated formation of the cyclopentane ring and macrocyclization to afford 7-deoxy BFA. Alternatively, the first ring annulation can also occur on the ACP-tethered intermediate before the thiohydrolase release and lactonization. The C7-hydroxylation by another cytochrome P450 monooxygenase is believed to be the final step in the process to obtain the final structure of BFA. In addition to the HRPKS Bref-PKS and the thiohydrolase Bref-TH, the brefeldin A biosynthesis cluster contains 4 cytochrome p450 monooxygenases (called orf3 to orf6), as well a the probable cluster-specific transcription regulator orf8. In Eupenicillium brefeldianum (Penicillium brefeldianum), this protein is Cytochrome P450 monooxygenase orf6.